The chain runs to 446 residues: Ribosomal protein uS12 methylthiotransferase RimO (446 aa).

The MTTase N-terminal domain occupies 10–122 (KTLHMVSLGC…IDELVNEKRS (113 aa)). Residues Cys-19, Cys-53, Cys-85, Cys-154, Cys-158, and Cys-161 each coordinate [4Fe-4S] cluster. The Radical SAM core domain occupies 140 to 369 (TGSSYHAYVK…GEIISQTTQE (230 aa)). Residues 372–446 (ESEVGKTFEV…GDKLLATVIK (75 aa)) enclose the TRAM domain.

It belongs to the methylthiotransferase family. RimO subfamily. [4Fe-4S] cluster serves as cofactor.

The protein localises to the cytoplasm. The catalysed reaction is L-aspartate(89)-[ribosomal protein uS12]-hydrogen + (sulfur carrier)-SH + AH2 + 2 S-adenosyl-L-methionine = 3-methylsulfanyl-L-aspartate(89)-[ribosomal protein uS12]-hydrogen + (sulfur carrier)-H + 5'-deoxyadenosine + L-methionine + A + S-adenosyl-L-homocysteine + 2 H(+). In terms of biological role, catalyzes the methylthiolation of an aspartic acid residue of ribosomal protein uS12. The polypeptide is Ribosomal protein uS12 methylthiotransferase RimO (Aliarcobacter butzleri (strain RM4018) (Arcobacter butzleri)).